We begin with the raw amino-acid sequence, 86 residues long: uncharacterized protein (86 aa).

This is an uncharacterized protein from Bacillus subtilis (strain 168).